Here is a 511-residue protein sequence, read N- to C-terminus: GMP synthase [glutamine-hydrolyzing] (511 aa).

The Glutamine amidotransferase type-1 domain maps to 5 to 195 (DILVLDFGSQ…AKYACNCESV (191 aa)). Catalysis depends on C82, which acts as the Nucleophile. Residues H169 and E171 contribute to the active site. One can recognise a GMPS ATP-PPase domain in the interval 196–386 (WNMGSFAKTQ…LGLSKEVVYR (191 aa)). An ATP-binding site is contributed by 223 to 229 (SGGVDSS).

In terms of assembly, homodimer.

The catalysed reaction is XMP + L-glutamine + ATP + H2O = GMP + L-glutamate + AMP + diphosphate + 2 H(+). Its pathway is purine metabolism; GMP biosynthesis; GMP from XMP (L-Gln route): step 1/1. Its function is as follows. Catalyzes the synthesis of GMP from XMP. This Campylobacter jejuni (strain RM1221) protein is GMP synthase [glutamine-hydrolyzing].